Here is a 30-residue protein sequence, read N- to C-terminus: Thylakoid lumenal 13.3 kDa protein (30 aa).

The protein localises to the plastid. It is found in the chloroplast thylakoid lumen. The protein is Thylakoid lumenal 13.3 kDa protein of Spinacia oleracea (Spinach).